The following is a 394-amino-acid chain: Elongation factor Tu (394 aa).

The tr-type G domain occupies 10–204 (KPHINVGTIG…HLDNYIPEPK (195 aa)). The tract at residues 19 to 26 (GHVDHGKT) is G1. GTP is bound at residue 19-26 (GHVDHGKT). Position 26 (Thr-26) interacts with Mg(2+). Residues 60–64 (GITIN) are G2. The tract at residues 81-84 (DCPG) is G3. Residues 81–85 (DCPGH) and 136–139 (NKCD) contribute to the GTP site. Residues 136–139 (NKCD) form a G4 region. Positions 174–176 (SAL) are G5.

It belongs to the TRAFAC class translation factor GTPase superfamily. Classic translation factor GTPase family. EF-Tu/EF-1A subfamily. Monomer.

Its subcellular location is the cytoplasm. The catalysed reaction is GTP + H2O = GDP + phosphate + H(+). In terms of biological role, GTP hydrolase that promotes the GTP-dependent binding of aminoacyl-tRNA to the A-site of ribosomes during protein biosynthesis. This Wigglesworthia glossinidia brevipalpis protein is Elongation factor Tu.